Here is an 893-residue protein sequence, read N- to C-terminus: MTKLTVKALSEEIGTPVDRLLQQFSDAGINKKDGDSVSEGEKQSLLVHLKKEHGSADDSASPTRLTLQRKTRSTLSVAGSGGKSKDVQVEVRKKRTYVKASALEEEKKAEQLKAEAEEQAKRDAEEAAVRELEQKAQREAEEQAKREAEAEAKAKREAEEKAKRAEADKAKKEMTKKNEQAKKEADELKARQELEATRKAEAEAAKLVEEARKLAEENEARWKEEEQKKSAAEKDADYHVTTSSHAREAEDAADRKEEQQPRRRKKKAKPAEAAAPRGGRNQRGGRNKKAQVNKPTSMQHGFDKSATVAKQDVAIGETIVVSELASKMSVKATEVIKVMMKMGAMATINQVIDQETAQLVAEEMGHKVILRKENELEEAVLSDRDNSAEAEGRAPVVTIMGHVDHGKTSTLDYIRRAHVADAEAGGITQHIGAYHVETDNGMITFLDTPGHAAFTAMRARGAQATDIVVLVVAADDGVMPQTIEAIQHAKAAGVPLIVAVNKIDKEGANPDNVKNELAQYDVIPEEWGGENIFVHISAKQGTNIDGLLEAILLQSEVLELTAVREGMASGVVVESRLDKGRGPVATVLVQSGTLNKGDIVLCGQEYGRVRAMRDENGKDIESAGPSIPVEILGLSGVPASGDEATVVRDERKAREVANYRQGKFRDVKLARQQKAKLENMFANMEAGEVAELNVVLKADVQGSVEAIADSLLKLSTDEVKVNIVGSGVGGITETDATLAAASNAIILGFNVRADATARRTVENENLDLRYYSIIYQLIDEVKAAMGGMLAPEFKQEIIGLAQVRDVFKSPKLGAIAGCMVTEGTIKRSNPIRVLRDNVVIYEGELESLRRFKDDVAEVKNGYECGIGVKNYNDVRVGDQIEVFEIVEIKRTLD.

Disordered regions lie at residues 51–203 (KEHG…AEAE) and 216–300 (EENE…SMQH). Basic and acidic residues-rich tracts occupy residues 102–203 (ALEE…AEAE), 216–238 (EENE…DADY), and 245–261 (HARE…EQQP). The 170-residue stretch at 392–561 (GRAPVVTIMG…LLQSEVLELT (170 aa)) folds into the tr-type G domain. The G1 stretch occupies residues 401 to 408 (GHVDHGKT). 401-408 (GHVDHGKT) lines the GTP pocket. A G2 region spans residues 426–430 (GITQH). Residues 447 to 450 (DTPG) form a G3 region. GTP contacts are provided by residues 447 to 451 (DTPGH) and 501 to 504 (NKID). A G4 region spans residues 501 to 504 (NKID). Residues 537–539 (SAK) form a G5 region.

Belongs to the TRAFAC class translation factor GTPase superfamily. Classic translation factor GTPase family. IF-2 subfamily.

The protein resides in the cytoplasm. Functionally, one of the essential components for the initiation of protein synthesis. Protects formylmethionyl-tRNA from spontaneous hydrolysis and promotes its binding to the 30S ribosomal subunits. Also involved in the hydrolysis of GTP during the formation of the 70S ribosomal complex. The sequence is that of Translation initiation factor IF-2 from Aliivibrio fischeri (strain MJ11) (Vibrio fischeri).